A 254-amino-acid polypeptide reads, in one-letter code: Transcription factor bHLH51 (254 aa).

The region spanning 62-111 is the bHLH domain; the sequence is SLSRSHRLAEKRRRDRINSHLTALRKLVPNSDKLDKAALLATVIEQVKEL.

Homodimer. As to expression, expressed constitutively in roots, stems, and flowers.

The protein localises to the nucleus. This Arabidopsis thaliana (Mouse-ear cress) protein is Transcription factor bHLH51 (BHLH51).